The sequence spans 122 residues: UPF0102 protein RHE_CH00320 (122 aa).

Belongs to the UPF0102 family.

The sequence is that of UPF0102 protein RHE_CH00320 from Rhizobium etli (strain ATCC 51251 / DSM 11541 / JCM 21823 / NBRC 15573 / CFN 42).